A 272-amino-acid chain; its full sequence is Alcohol dehydrogenase-related 31 kDa protein (272 aa).

11 to 34 is an NAD(+) binding site; the sequence is YVADCGGIALETSKVLMTKNIAKL. Ser139 is a substrate binding site. Residue Tyr152 is the Proton acceptor of the active site.

Belongs to the short-chain dehydrogenases/reductases (SDR) family.

In Drosophila melanogaster (Fruit fly), this protein is Alcohol dehydrogenase-related 31 kDa protein (Adhr).